Reading from the N-terminus, the 225-residue chain is Uracil-DNA glycosylase (225 aa).

Asp-68 (proton acceptor) is an active-site residue.

The protein belongs to the uracil-DNA glycosylase (UDG) superfamily. UNG family.

It localises to the cytoplasm. The enzyme catalyses Hydrolyzes single-stranded DNA or mismatched double-stranded DNA and polynucleotides, releasing free uracil.. Functionally, excises uracil residues from the DNA which can arise as a result of misincorporation of dUMP residues by DNA polymerase or due to deamination of cytosine. The polypeptide is Uracil-DNA glycosylase (Mycolicibacterium gilvum (strain PYR-GCK) (Mycobacterium gilvum (strain PYR-GCK))).